A 498-amino-acid polypeptide reads, in one-letter code: UDP-N-acetylmuramoylalanine--D-glutamate ligase (498 aa).

An ATP-binding site is contributed by Gly119–Thr125.

The protein belongs to the MurCDEF family.

Its subcellular location is the cytoplasm. The enzyme catalyses UDP-N-acetyl-alpha-D-muramoyl-L-alanine + D-glutamate + ATP = UDP-N-acetyl-alpha-D-muramoyl-L-alanyl-D-glutamate + ADP + phosphate + H(+). Its pathway is cell wall biogenesis; peptidoglycan biosynthesis. Functionally, cell wall formation. Catalyzes the addition of glutamate to the nucleotide precursor UDP-N-acetylmuramoyl-L-alanine (UMA). This is UDP-N-acetylmuramoylalanine--D-glutamate ligase from Wolbachia sp. subsp. Brugia malayi (strain TRS).